The following is a 77-amino-acid chain: Acyl carrier protein (77 aa).

Positions 2–77 (ADTLSRITKI…DVVEYIEGRQ (76 aa)) constitute a Carrier domain. Ser-37 carries the post-translational modification O-(pantetheine 4'-phosphoryl)serine.

Belongs to the acyl carrier protein (ACP) family. 4'-phosphopantetheine is transferred from CoA to a specific serine of apo-ACP by AcpS. This modification is essential for activity because fatty acids are bound in thioester linkage to the sulfhydryl of the prosthetic group.

It is found in the cytoplasm. Its pathway is lipid metabolism; fatty acid biosynthesis. Functionally, carrier of the growing fatty acid chain in fatty acid biosynthesis. This Halalkalibacterium halodurans (strain ATCC BAA-125 / DSM 18197 / FERM 7344 / JCM 9153 / C-125) (Bacillus halodurans) protein is Acyl carrier protein.